The sequence spans 78 residues: Large ribosomal subunit protein bL28 (78 aa).

The interval 1–26 (MSAYCQVTGRKPSFGKSVSHSHRRTN) is disordered.

Belongs to the bacterial ribosomal protein bL28 family.

The sequence is that of Large ribosomal subunit protein bL28 from Corynebacterium jeikeium (strain K411).